A 134-amino-acid chain; its full sequence is Transcription antitermination protein NusB (134 aa).

The protein belongs to the NusB family.

Its function is as follows. Involved in transcription antitermination. Required for transcription of ribosomal RNA (rRNA) genes. Binds specifically to the boxA antiterminator sequence of the ribosomal RNA (rrn) operons. The protein is Transcription antitermination protein NusB of Shewanella oneidensis (strain ATCC 700550 / JCM 31522 / CIP 106686 / LMG 19005 / NCIMB 14063 / MR-1).